The chain runs to 532 residues: Collagen alpha-1(XXIII) chain (532 aa).

Residues 1 to 23 (MGAGERAAGGGGAQDPGAGCGSR) lie on the Cytoplasmic side of the membrane. A helical; Signal-anchor for type II membrane protein membrane pass occupies residues 24 to 45 (ALSALCLLLSVGSAAACLLLGA). Topologically, residues 46-532 (QAAALHGRVA…GLPVPGCWHK (487 aa)) are extracellular. Disordered regions lie at residues 102–296 (PSEC…GEQG) and 308–532 (LDAL…CWHK). Collagen-like domains are found at residues 108 to 166 (PPGP…RGAQ), 173 to 232 (GPPG…PGKK), 240 to 298 (QPGL…QGDT), and 313 to 372 (GPPG…MGLS). A compositionally biased stretch (low complexity) spans 129 to 145 (QSGRDGYPGPLGLDGKP). Over residues 174-184 (PPGPPGPPGAR) the composition is skewed to pro residues. Over residues 196–207 (RGAQGPAGPRGE) the composition is skewed to low complexity. A compositionally biased stretch (pro residues) spans 314 to 326 (PPGPQGAPGPPGI). Composition is skewed to basic and acidic residues over residues 342-354 (DGEKGPKGPKGDP) and 380-393 (PKGEKGESASDHLQ). The span at 403–414 (PGPPGPPGPPGP) shows a compositional bias: pro residues. Collagen-like domains lie at 404-452 (GPPG…GPPG) and 455-514 (GLPG…PGLD). Composition is skewed to basic and acidic residues over residues 427–441 (DGAKGEKGTSGERGP) and 478–495 (RGEKGDRSERGEKGERGV).

As to quaternary structure, homotrimer. Undergoes proteolytic cleavage by furin protease to yield a 60 kDa soluble form that forms a homotrimer and exhibits a low affinity interaction with heparin.

It is found in the cell membrane. This is Collagen alpha-1(XXIII) chain (Col23a1) from Mus musculus (Mouse).